A 754-amino-acid chain; its full sequence is 5-methyltetrahydropteroyltriglutamate--homocysteine methyltransferase (754 aa).

Residues 17–20 (RELK) and Lys117 each bind 5-methyltetrahydropteroyltri-L-glutamate. Residues 431–433 (IGS) and Glu484 contribute to the L-homocysteine site. L-methionine contacts are provided by residues 431-433 (IGS) and Glu484. 5-methyltetrahydropteroyltri-L-glutamate contacts are provided by residues 515–516 (RC) and Trp561. Asp599 lines the L-homocysteine pocket. L-methionine is bound at residue Asp599. Position 605 (Glu605) interacts with 5-methyltetrahydropteroyltri-L-glutamate. Residues His641, Cys643, and Glu665 each coordinate Zn(2+). His694 functions as the Proton donor in the catalytic mechanism. Cys726 provides a ligand contact to Zn(2+).

This sequence belongs to the vitamin-B12 independent methionine synthase family. The cofactor is Zn(2+).

The enzyme catalyses 5-methyltetrahydropteroyltri-L-glutamate + L-homocysteine = tetrahydropteroyltri-L-glutamate + L-methionine. It functions in the pathway amino-acid biosynthesis; L-methionine biosynthesis via de novo pathway; L-methionine from L-homocysteine (MetE route): step 1/1. Its function is as follows. Catalyzes the transfer of a methyl group from 5-methyltetrahydrofolate to homocysteine resulting in methionine formation. This chain is 5-methyltetrahydropteroyltriglutamate--homocysteine methyltransferase, found in Salmonella choleraesuis (strain SC-B67).